We begin with the raw amino-acid sequence, 275 residues long: Bis(5'-nucleosyl)-tetraphosphatase, symmetrical (275 aa).

It belongs to the Ap4A hydrolase family.

It catalyses the reaction P(1),P(4)-bis(5'-adenosyl) tetraphosphate + H2O = 2 ADP + 2 H(+). Hydrolyzes diadenosine 5',5'''-P1,P4-tetraphosphate to yield ADP. This is Bis(5'-nucleosyl)-tetraphosphatase, symmetrical (apaH) from Pasteurella multocida (strain Pm70).